The chain runs to 636 residues: Protein BCAP (636 aa).

Coiled-coil stretches lie at residues 36 to 97 (LSCL…EQKE), 141 to 220 (ESEN…WNLQ), 249 to 325 (YKQR…HGKN), 377 to 484 (ISSE…ECQE), and 519 to 631 (LEEE…KMNS).

It belongs to the ODF2 family. As to expression, mainly expressed in trachea and testis. Not detected in bone marrow, bladder, leukocytes. Only weakly detected in tongue, stomach, brain and ovaries.

Its subcellular location is the cytoplasm. It is found in the cytoskeleton. It localises to the microtubule organizing center. The protein localises to the centrosome. The protein resides in the centriole. Its subcellular location is the centriolar satellite. It is found in the cilium basal body. Its function is as follows. Acts as a suppressor of ciliogenesis, specifically, the initiation of ciliogenesis. The protein is Protein BCAP of Homo sapiens (Human).